The sequence spans 592 residues: A-type ATP synthase subunit A (592 aa).

233 to 240 (GPFGSGKT) contributes to the ATP binding site.

This sequence belongs to the ATPase alpha/beta chains family. As to quaternary structure, has multiple subunits with at least A(3), B(3), C, D, E, F, H, I and proteolipid K(x).

The protein localises to the cell membrane. The catalysed reaction is ATP + H2O + 4 H(+)(in) = ADP + phosphate + 5 H(+)(out). Functionally, component of the A-type ATP synthase that produces ATP from ADP in the presence of a proton gradient across the membrane. The A chain is the catalytic subunit. The chain is A-type ATP synthase subunit A from Saccharolobus solfataricus (strain ATCC 35092 / DSM 1617 / JCM 11322 / P2) (Sulfolobus solfataricus).